We begin with the raw amino-acid sequence, 453 residues long: tRNA modification GTPase MnmE (453 aa).

(6S)-5-formyl-5,6,7,8-tetrahydrofolate contacts are provided by arginine 22, glutamate 79, and lysine 119. The TrmE-type G domain maps to 215–376; sequence GMKVVIAGRP…LKQHLKSLMG (162 aa). Asparagine 225 serves as a coordination point for K(+). GTP is bound by residues 225-230, 244-250, 269-272, and 334-337; these read NAGKSS, TEIAGTT, DTAG, and NKAD. Serine 229 contacts Mg(2+). 3 residues coordinate K(+): threonine 244, isoleucine 246, and threonine 249. Threonine 250 lines the Mg(2+) pocket. A (6S)-5-formyl-5,6,7,8-tetrahydrofolate-binding site is contributed by lysine 453.

The protein belongs to the TRAFAC class TrmE-Era-EngA-EngB-Septin-like GTPase superfamily. TrmE GTPase family. Homodimer. Heterotetramer of two MnmE and two MnmG subunits. The cofactor is K(+).

The protein resides in the cytoplasm. Its function is as follows. Exhibits a very high intrinsic GTPase hydrolysis rate. Involved in the addition of a carboxymethylaminomethyl (cmnm) group at the wobble position (U34) of certain tRNAs, forming tRNA-cmnm(5)s(2)U34. In Shewanella baltica (strain OS155 / ATCC BAA-1091), this protein is tRNA modification GTPase MnmE.